Consider the following 782-residue polypeptide: uncharacterized protein (782 aa).

2 disordered regions span residues methionine 1–serine 25 and arginine 175–arginine 195. The span at glutamate 13 to serine 25 shows a compositional bias: low complexity. Positions arginine 183 to arginine 195 are enriched in basic and acidic residues. Coiled coils occupy residues arginine 223–asparagine 331, leucine 348–leucine 398, asparagine 428–asparagine 601, and threonine 699–lysine 743. The segment at asparagine 748–leucine 782 is disordered. Over residues alanine 769–leucine 782 the composition is skewed to polar residues.

This is an uncharacterized protein from Caenorhabditis elegans.